Consider the following 157-residue polypeptide: Class-10 pathogenesis-related protein 1 (157 aa).

This sequence belongs to the BetVI family. As to expression, high levels in roots and not detectable in hypocotyls, cotyledons, stems, leaves and flower buds of untreated plants. After induction, high levels are present in the vascular bundles of leaves.

The protein resides in the cytoplasm. This chain is Class-10 pathogenesis-related protein 1 (MSPR10-1), found in Medicago sativa (Alfalfa).